We begin with the raw amino-acid sequence, 294 residues long: Acetylglutamate kinase (294 aa).

Residues 63–64 (GG), arginine 85, and asparagine 188 contribute to the substrate site.

The protein belongs to the acetylglutamate kinase family. ArgB subfamily.

The protein localises to the cytoplasm. The catalysed reaction is N-acetyl-L-glutamate + ATP = N-acetyl-L-glutamyl 5-phosphate + ADP. The protein operates within amino-acid biosynthesis; L-arginine biosynthesis; N(2)-acetyl-L-ornithine from L-glutamate: step 2/4. Its function is as follows. Catalyzes the ATP-dependent phosphorylation of N-acetyl-L-glutamate. This is Acetylglutamate kinase from Methanococcus vannielii (strain ATCC 35089 / DSM 1224 / JCM 13029 / OCM 148 / SB).